The chain runs to 375 residues: SAP-like protein BP-73 (375 aa).

Disordered regions lie at residues 46 to 113 (PNNH…VPGE), 130 to 233 (RARG…VKFQ), and 257 to 315 (TLEN…PSLQ). Positions 59–70 (HQKGGSARRKSK) are enriched in basic residues. Over residues 76 to 86 (DDSENIDEFDT) the composition is skewed to acidic residues. Over residues 88–109 (IMSSKNGPPISLTSNSRPQATS) the composition is skewed to polar residues. Composition is skewed to basic and acidic residues over residues 134 to 152 (KGKE…ERGS) and 163 to 186 (HSVD…KRSN). A compositionally biased stretch (polar residues) spans 187–197 (ESGNKQNSSIF). Residues 295–311 (DEPDASDTDEPSGEYDE) show a composition bias toward acidic residues. The segment at 338-375 (DLSTLKVTELRELAKSRGIKGYSKMKKNDLVELLSNMA) is interaction with WAXY.

As to quaternary structure, binds to the DNA in the promoter region of WAXY containing the sequence 5'-ACGCACGCTAACGTGA-3'. In terms of tissue distribution, expressed in tissues with high cell division activities: in root tips, stem node, panicle, flower and immature seed. Weakly expressed in root and leaf.

Its function is as follows. May regulate cell proliferation and plant growth. This chain is SAP-like protein BP-73 (BP-73), found in Oryza sativa subsp. japonica (Rice).